The sequence spans 480 residues: Sestrin-2 (480 aa).

Methionine 1 is modified (N-acetylmethionine). The tract at residues 20–45 (PGGVGDSGPGEEQRESRARRGPRGPS) is disordered. The tract at residues 66 to 239 (GLEALMSSGR…APTPPSEQSS (174 aa)) is N-terminal domain; mediates the alkylhydroperoxide reductase activity. The active-site Cysteine sulfenic acid (-SOH) intermediate is cysteine 125. Lysine 175 participates in a covalent cross-link: Glycyl lysine isopeptide (Lys-Gly) (interchain with G-Cter in ubiquitin). Residues 222–252 (ADGSPAPQAPTPPSEQSSPPSRDPLNNSGGF) are disordered. Serine 249 is subject to Phosphoserine. The tract at residues 308 to 480 (PHPDMLCFVE…ALRAITRYMT (173 aa)) is C-terminal domain; mediates TORC1 regulation. L-leucine is bound by residues 374 to 377 (TYNT), threonine 386, and glutamate 451.

Belongs to the sestrin family. In terms of assembly, interacts with the GATOR2 complex which is composed of MIOS, SEC13, SEH1L, WDR24 and WDR59; the interaction is negatively regulated by leucine. Conveys leucine availability via direct interaction with SEH1L and WDR24 components of the GATOR2 complex. Interacts with RRAGA, RRAGB, RRAGC and RRAGD; may function as a guanine nucleotide dissociation inhibitor for RRAGs and regulate them. May interact with the TORC2 complex. Interacts with KEAP1, RBX1, SQSTM and ULK1; to regulate the degradation of KEAP1. May also associate with the complex composed of TSC1, TSC2 and the AMP-responsive protein kinase/AMPK to regulate TORC1 signaling. May interact with PRDX1. Post-translationally, phosphorylated by ULK1 at multiple sites. In terms of processing, ubiquitinated at Lys-175 by RNF167 via 'Lys-63'-linked polyubiquitination in response to leucine deprivation: ubiquitination promotes SESN2-interaction with the GATOR2 complex, leading to inhibit the TORC1 signaling pathway. Deubiquitinated at Lys-175 by STAMBPL1, promoting the TORC1 signaling pathway. Ubiquitinated by RNF186; ubiquitination mediates proteasomal degradation.

The protein localises to the cytoplasm. The catalysed reaction is a hydroperoxide + L-cysteinyl-[protein] = S-hydroxy-L-cysteinyl-[protein] + an alcohol. In terms of biological role, functions as an intracellular leucine sensor that negatively regulates the mTORC1 signaling pathway through the GATOR complex. In absence of leucine, binds the GATOR subcomplex GATOR2 and prevents mTORC1 signaling. Binding of leucine to SESN2 disrupts its interaction with GATOR2 thereby activating the TORC1 signaling pathway. This stress-inducible metabolic regulator also plays a role in protection against oxidative and genotoxic stresses. May negatively regulate protein translation in response to endoplasmic reticulum stress, via mTORC1. May positively regulate the transcription by NFE2L2 of genes involved in the response to oxidative stress by facilitating the SQSTM1-mediated autophagic degradation of KEAP1. May also mediate TP53 inhibition of TORC1 signaling upon genotoxic stress. Moreover, may prevent the accumulation of reactive oxygen species (ROS) through the alkylhydroperoxide reductase activity born by the N-terminal domain of the protein. Was originally reported to contribute to oxidative stress resistance by reducing PRDX1. However, this could not be confirmed. This Pongo abelii (Sumatran orangutan) protein is Sestrin-2.